Consider the following 449-residue polypeptide: Glutamyl-tRNA reductase (449 aa).

Substrate is bound by residues 58-61, Ser-121, 126-128, and Gln-132; these read TCNR and ETQ. The active-site Nucleophile is the Cys-59. 203–208 is an NADP(+) binding site; the sequence is GLGEMA.

Belongs to the glutamyl-tRNA reductase family. Homodimer.

It carries out the reaction (S)-4-amino-5-oxopentanoate + tRNA(Glu) + NADP(+) = L-glutamyl-tRNA(Glu) + NADPH + H(+). The protein operates within porphyrin-containing compound metabolism; protoporphyrin-IX biosynthesis; 5-aminolevulinate from L-glutamyl-tRNA(Glu): step 1/2. Catalyzes the NADPH-dependent reduction of glutamyl-tRNA(Glu) to glutamate 1-semialdehyde (GSA). In Helicobacter pylori (strain J99 / ATCC 700824) (Campylobacter pylori J99), this protein is Glutamyl-tRNA reductase.